The following is a 118-amino-acid chain: Urease subunit beta (118 aa).

The protein belongs to the urease beta subunit family. As to quaternary structure, heterotrimer of UreA (gamma), UreB (beta) and UreC (alpha) subunits. Three heterotrimers associate to form the active enzyme.

Its subcellular location is the cytoplasm. It carries out the reaction urea + 2 H2O + H(+) = hydrogencarbonate + 2 NH4(+). The protein operates within nitrogen metabolism; urea degradation; CO(2) and NH(3) from urea (urease route): step 1/1. This is Urease subunit beta from Aliivibrio fischeri (strain ATCC 700601 / ES114) (Vibrio fischeri).